Here is a 476-residue protein sequence, read N- to C-terminus: ATP synthase subunit beta (476 aa).

154-161 (GGAGVGKT) contributes to the ATP binding site.

This sequence belongs to the ATPase alpha/beta chains family. As to quaternary structure, F-type ATPases have 2 components, CF(1) - the catalytic core - and CF(0) - the membrane proton channel. CF(1) has five subunits: alpha(3), beta(3), gamma(1), delta(1), epsilon(1). CF(0) has four main subunits: a(1), b(1), b'(1) and c(9-12).

The protein resides in the cell inner membrane. It catalyses the reaction ATP + H2O + 4 H(+)(in) = ADP + phosphate + 5 H(+)(out). In terms of biological role, produces ATP from ADP in the presence of a proton gradient across the membrane. The catalytic sites are hosted primarily by the beta subunits. In Rhodopseudomonas palustris (strain HaA2), this protein is ATP synthase subunit beta.